The following is a 78-amino-acid chain: Defensin-like protein 149 (78 aa).

The N-terminal stretch at 1–25 (MMKKLIQLSFTVMIIFTILVLGVVA) is a signal peptide. 4 cysteine pairs are disulfide-bonded: C36–C77, C45–C65, C50–C71, and C54–C73.

The protein belongs to the DEFL family.

The protein resides in the secreted. The polypeptide is Defensin-like protein 149 (LCR5) (Arabidopsis thaliana (Mouse-ear cress)).